A 76-amino-acid polypeptide reads, in one-letter code: UPF0235 protein MRA_1997 (76 aa).

It belongs to the UPF0235 family.

This Mycobacterium tuberculosis (strain ATCC 25177 / H37Ra) protein is UPF0235 protein MRA_1997.